The following is a 1436-amino-acid chain: Gag-Pol polyprotein (1436 aa).

A lipid anchor (N-myristoyl glycine; by host) is attached at G2. The tract at residues 7 to 31 (VLSGGKLDKWEKIRLRPRGKKRYKL) is interaction with Gp41. Residues 8–43 (LSGGKLDKWEKIRLRPRGKKRYKLKHIVWASRELER) are interaction with host CALM1. Positions 12-19 (KLDKWEKI) are interaction with host AP3D1. An interaction with membrane phosphatidylinositol 4,5-bisphosphate and RNA region spans residues 14-33 (DKWEKIRLRPRGKKRYKLKH). A Nuclear export signal motif is present at residues 16–22 (WEKIRLR). The short motif at 26 to 32 (KKRYKLK) is the Nuclear localization signal element. The tract at residues 73-77 (EELKS) is interaction with membrane phosphatidylinositol 4,5-bisphosphate. Residues 106-128 (EEQNKSKKKAQQAAADTGNGSQV) are disordered. Y132 carries the phosphotyrosine; by host modification. The segment at 189-227 (NTVGGHQAAMQMLKETINEEAAEWDRLHPVHAGPIAPGQ) is interaction with human PPIA/CYPA and NUP153. The segment at 277 to 363 (YSPISILDIR…GGPSHKARIL (87 aa)) is dimerization/Multimerization of capsid protein p24. CCHC-type zinc fingers lie at residues 390–407 (VKCF…NCRA) and 411–428 (KGCW…DCTN). Residues 446–465 (KARELSSEQTRANSPTRREL) are disordered. A dimerization of protease region spans residues 490–494 (PQITL). The 70-residue stretch at 509–578 (KEALLDTGAD…TPVNIIGRNL (70 aa)) folds into the Peptidase A2 domain. The active-site For protease activity; shared with dimeric partner is D514. 2 dimerization of protease regions span residues 538–544 (GIGGFIK) and 577–589 (NLLT…LNFP). One can recognise a Reverse transcriptase domain in the interval 632-822 (EGKISKIGPE…PPFLWMGYEL (191 aa)). Mg(2+)-binding residues include D698, D773, and D774. The segment at 815–823 (FLWMGYELH) is RT 'primer grip'. The Tryptophan repeat motif signature appears at 986–1002 (WEAWWTEYWQATWIPEW). In terms of domain architecture, RNase H type-1 spans 1022–1145 (IIGAETFYVD…VDRLVSTGIR (124 aa)). Mg(2+) is bound by residues D1031, E1066, D1086, and D1137. An Integrase-type zinc finger spans residues 1151–1192 (DGIDKAQDEHEKYHSNWRAMASDFNLPPVVAKEIVASCDKCQ). Residues H1160, H1164, C1188, and C1191 each coordinate Zn(2+). Residues 1202–1352 (VDCSPGIWQL…SAGERIVDII (151 aa)) form the Integrase catalytic domain. Residues D1212, D1264, and E1300 each coordinate Mg(2+). Positions 1371–1418 (FRVYYRDSRDPLWKGHAKLLWKGEGAVVIQDNSDIKVVPRRKAKIIRD) form a DNA-binding region, integrase-type.

Homotrimer; further assembles as hexamers of trimers. Interacts with gp41 (via C-terminus). Interacts with host CALM1; this interaction induces a conformational change in the Matrix protein, triggering exposure of the myristate group. Interacts with host AP3D1; this interaction allows the polyprotein trafficking to multivesicular bodies during virus assembly. Part of the pre-integration complex (PIC) which is composed of viral genome, matrix protein, Vpr and integrase. In terms of assembly, homodimer; the homodimer further multimerizes as homohexamers or homopentamers. Interacts with human PPIA/CYPA; This interaction stabilizes the capsid. Interacts with human NUP153. Interacts with host PDZD8; this interaction stabilizes the capsid. Interacts with monkey TRIM5; this interaction destabilizes the capsid. As to quaternary structure, homodimer, whose active site consists of two apposed aspartic acid residues. Heterodimer of p66 RT and p51 RT (RT p66/p51). Heterodimerization of RT is essential for DNA polymerase activity. The overall folding of the subdomains is similar in p66 RT and p51 RT but the spatial arrangements of the subdomains are dramatically different. In terms of assembly, homotetramer; may further associate as a homohexadecamer. Part of the pre-integration complex (PIC) which is composed of viral genome, matrix protein, Vpr and integrase. Interacts with human SMARCB1/INI1 and human PSIP1/LEDGF isoform 1. Interacts with human KPNA3; this interaction might play a role in nuclear import of the pre-integration complex. Interacts with human NUP153; this interaction might play a role in nuclear import of the pre-integration complex. Mg(2+) is required as a cofactor. Post-translationally, specific enzymatic cleavages by the viral protease yield mature proteins. The protease is released by autocatalytic cleavage. The polyprotein is cleaved during and after budding, this process is termed maturation. Proteolytic cleavage of p66 RT removes the RNase H domain to yield the p51 RT subunit. Nucleocapsid protein p7 might be further cleaved after virus entry. In terms of processing, tyrosine phosphorylated presumably in the virion by a host kinase. Phosphorylation is apparently not a major regulator of membrane association. Phosphorylated possibly by host MAPK1; this phosphorylation is necessary for Pin1-mediated virion uncoating. Post-translationally, methylated by host PRMT6, impairing its function by reducing RNA annealing and the initiation of reverse transcription.

The protein localises to the host cell membrane. It localises to the host endosome. It is found in the host multivesicular body. The protein resides in the virion membrane. Its subcellular location is the host nucleus. The protein localises to the host cytoplasm. It localises to the virion. It catalyses the reaction Specific for a P1 residue that is hydrophobic, and P1' variable, but often Pro.. The catalysed reaction is Endohydrolysis of RNA in RNA/DNA hybrids. Three different cleavage modes: 1. sequence-specific internal cleavage of RNA. Human immunodeficiency virus type 1 and Moloney murine leukemia virus enzymes prefer to cleave the RNA strand one nucleotide away from the RNA-DNA junction. 2. RNA 5'-end directed cleavage 13-19 nucleotides from the RNA end. 3. DNA 3'-end directed cleavage 15-20 nucleotides away from the primer terminus.. The enzyme catalyses 3'-end directed exonucleolytic cleavage of viral RNA-DNA hybrid.. It carries out the reaction DNA(n) + a 2'-deoxyribonucleoside 5'-triphosphate = DNA(n+1) + diphosphate. Protease: The viral protease is inhibited by many synthetic protease inhibitors (PIs), such as amprenavir, atazanavir, indinavir, loprinavir, nelfinavir, ritonavir and saquinavir. Use of protease inhibitors in tritherapy regimens permit more ambitious therapeutic strategies. Reverse transcriptase/ribonuclease H: RT can be inhibited either by nucleoside RT inhibitors (NRTIs) or by non nucleoside RT inhibitors (NNRTIs). NRTIs act as chain terminators, whereas NNRTIs inhibit DNA polymerization by binding a small hydrophobic pocket near the RT active site and inducing an allosteric change in this region. Classical NRTIs are abacavir, adefovir (PMEA), didanosine (ddI), lamivudine (3TC), stavudine (d4T), tenofovir (PMPA), zalcitabine (ddC), and zidovudine (AZT). Classical NNRTIs are atevirdine (BHAP U-87201E), delavirdine, efavirenz (DMP-266), emivirine (I-EBU), and nevirapine (BI-RG-587). The tritherapies used as a basic effective treatment of AIDS associate two NRTIs and one NNRTI. Functionally, mediates, with Gag polyprotein, the essential events in virion assembly, including binding the plasma membrane, making the protein-protein interactions necessary to create spherical particles, recruiting the viral Env proteins, and packaging the genomic RNA via direct interactions with the RNA packaging sequence (Psi). Gag-Pol polyprotein may regulate its own translation, by the binding genomic RNA in the 5'-UTR. At low concentration, the polyprotein would promote translation, whereas at high concentration, the polyprotein would encapsidate genomic RNA and then shut off translation. Its function is as follows. Targets the polyprotein to the plasma membrane via a multipartite membrane-binding signal, that includes its myristoylated N-terminus. Matrix protein is part of the pre-integration complex. Implicated in the release from host cell mediated by Vpu. Binds to RNA. Forms the conical core that encapsulates the genomic RNA-nucleocapsid complex in the virion. Most core are conical, with only 7% tubular. The core is constituted by capsid protein hexamer subunits. The core is disassembled soon after virion entry. Host restriction factors such as TRIM5-alpha or TRIMCyp bind retroviral capsids and cause premature capsid disassembly, leading to blocks in reverse transcription. Capsid restriction by TRIM5 is one of the factors which restricts HIV-1 to the human species. Host PIN1 apparently facilitates the virion uncoating. On the other hand, interactions with PDZD8 or CYPA stabilize the capsid. In terms of biological role, encapsulates and protects viral dimeric unspliced genomic RNA (gRNA). Binds these RNAs through its zinc fingers. Acts as a nucleic acid chaperone which is involved in rearangement of nucleic acid secondary structure during gRNA retrotranscription. Also facilitates template switch leading to recombination. As part of the polyprotein, participates in gRNA dimerization, packaging, tRNA incorporation and virion assembly. Functionally, aspartyl protease that mediates proteolytic cleavages of Gag and Gag-Pol polyproteins during or shortly after the release of the virion from the plasma membrane. Cleavages take place as an ordered, step-wise cascade to yield mature proteins. This process is called maturation. Displays maximal activity during the budding process just prior to particle release from the cell. Also cleaves Nef and Vif, probably concomitantly with viral structural proteins on maturation of virus particles. Hydrolyzes host EIF4GI and PABP1 in order to shut off the capped cellular mRNA translation. The resulting inhibition of cellular protein synthesis serves to ensure maximal viral gene expression and to evade host immune response. Also mediates cleavage of host YTHDF3. Mediates cleavage of host CARD8, thereby activating the CARD8 inflammasome, leading to the clearance of latent HIV-1 in patient CD4(+) T-cells after viral reactivation; in contrast, HIV-1 can evade CARD8-sensing when its protease remains inactive in infected cells prior to viral budding. Its function is as follows. Multifunctional enzyme that converts the viral RNA genome into dsDNA in the cytoplasm, shortly after virus entry into the cell. This enzyme displays a DNA polymerase activity that can copy either DNA or RNA templates, and a ribonuclease H (RNase H) activity that cleaves the RNA strand of RNA-DNA heteroduplexes in a partially processive 3' to 5' endonucleasic mode. Conversion of viral genomic RNA into dsDNA requires many steps. A tRNA(3)-Lys binds to the primer-binding site (PBS) situated at the 5'-end of the viral RNA. RT uses the 3' end of the tRNA primer to perform a short round of RNA-dependent minus-strand DNA synthesis. The reading proceeds through the U5 region and ends after the repeated (R) region which is present at both ends of viral RNA. The portion of the RNA-DNA heteroduplex is digested by the RNase H, resulting in a ssDNA product attached to the tRNA primer. This ssDNA/tRNA hybridizes with the identical R region situated at the 3' end of viral RNA. This template exchange, known as minus-strand DNA strong stop transfer, can be either intra- or intermolecular. RT uses the 3' end of this newly synthesized short ssDNA to perform the RNA-dependent minus-strand DNA synthesis of the whole template. RNase H digests the RNA template except for two polypurine tracts (PPTs) situated at the 5'-end and near the center of the genome. It is not clear if both polymerase and RNase H activities are simultaneous. RNase H probably can proceed both in a polymerase-dependent (RNA cut into small fragments by the same RT performing DNA synthesis) and a polymerase-independent mode (cleavage of remaining RNA fragments by free RTs). Secondly, RT performs DNA-directed plus-strand DNA synthesis using the PPTs that have not been removed by RNase H as primers. PPTs and tRNA primers are then removed by RNase H. The 3' and 5' ssDNA PBS regions hybridize to form a circular dsDNA intermediate. Strand displacement synthesis by RT to the PBS and PPT ends produces a blunt ended, linear dsDNA copy of the viral genome that includes long terminal repeats (LTRs) at both ends. Catalyzes viral DNA integration into the host chromosome, by performing a series of DNA cutting and joining reactions. This enzyme activity takes place after virion entry into a cell and reverse transcription of the RNA genome in dsDNA. The first step in the integration process is 3' processing. This step requires a complex comprising the viral genome, matrix protein, Vpr and integrase. This complex is called the pre-integration complex (PIC). The integrase protein removes 2 nucleotides from each 3' end of the viral DNA, leaving recessed CA OH's at the 3' ends. In the second step, the PIC enters cell nucleus. This process is mediated through integrase and Vpr proteins, and allows the virus to infect a non dividing cell. This ability to enter the nucleus is specific of lentiviruses, other retroviruses cannot and rely on cell division to access cell chromosomes. In the third step, termed strand transfer, the integrase protein joins the previously processed 3' ends to the 5' ends of strands of target cellular DNA at the site of integration. The 5'-ends are produced by integrase-catalyzed staggered cuts, 5 bp apart. A Y-shaped, gapped, recombination intermediate results, with the 5'-ends of the viral DNA strands and the 3' ends of target DNA strands remaining unjoined, flanking a gap of 5 bp. The last step is viral DNA integration into host chromosome. This involves host DNA repair synthesis in which the 5 bp gaps between the unjoined strands are filled in and then ligated. Since this process occurs at both cuts flanking the HIV genome, a 5 bp duplication of host DNA is produced at the ends of HIV-1 integration. Alternatively, Integrase may catalyze the excision of viral DNA just after strand transfer, this is termed disintegration. This Human immunodeficiency virus type 1 group M subtype B (isolate RF/HAT3) (HIV-1) protein is Gag-Pol polyprotein (gag-pol).